The primary structure comprises 158 residues: Protein shisa-like-2B (158 aa).

Residues 65-85 (IGALVGLGIAALVLLAFVISV) form a helical membrane-spanning segment.

This sequence belongs to the shisa family.

It is found in the membrane. In Mus musculus (Mouse), this protein is Protein shisa-like-2B (Shisal2b).